The following is an 82-amino-acid chain: Small ribosomal subunit protein bS16 (82 aa).

It belongs to the bacterial ribosomal protein bS16 family.

The protein is Small ribosomal subunit protein bS16 of Pseudoalteromonas translucida (strain TAC 125).